A 700-amino-acid polypeptide reads, in one-letter code: Elongation factor G (700 aa).

In terms of domain architecture, tr-type G spans 8-290; sequence ERYRNIGISA…AVVEFMPSPV (283 aa). GTP contacts are provided by residues 17-24, 88-92, and 142-145; these read AHIDAGKT, DTPGH, and NKMD.

The protein belongs to the TRAFAC class translation factor GTPase superfamily. Classic translation factor GTPase family. EF-G/EF-2 subfamily.

The protein localises to the cytoplasm. Functionally, catalyzes the GTP-dependent ribosomal translocation step during translation elongation. During this step, the ribosome changes from the pre-translocational (PRE) to the post-translocational (POST) state as the newly formed A-site-bound peptidyl-tRNA and P-site-bound deacylated tRNA move to the P and E sites, respectively. Catalyzes the coordinated movement of the two tRNA molecules, the mRNA and conformational changes in the ribosome. This chain is Elongation factor G, found in Albidiferax ferrireducens (strain ATCC BAA-621 / DSM 15236 / T118) (Rhodoferax ferrireducens).